The primary structure comprises 345 residues: Phosphoribosylformylglycinamidine cyclo-ligase (345 aa).

Belongs to the AIR synthase family.

Its subcellular location is the cytoplasm. It catalyses the reaction 2-formamido-N(1)-(5-O-phospho-beta-D-ribosyl)acetamidine + ATP = 5-amino-1-(5-phospho-beta-D-ribosyl)imidazole + ADP + phosphate + H(+). The protein operates within purine metabolism; IMP biosynthesis via de novo pathway; 5-amino-1-(5-phospho-D-ribosyl)imidazole from N(2)-formyl-N(1)-(5-phospho-D-ribosyl)glycinamide: step 2/2. This Actinobacillus succinogenes (strain ATCC 55618 / DSM 22257 / CCUG 43843 / 130Z) protein is Phosphoribosylformylglycinamidine cyclo-ligase.